The sequence spans 320 residues: Fructose-1,6-bisphosphatase class 1 (320 aa).

The Mg(2+) site is built by glutamate 93, aspartate 114, leucine 116, and aspartate 117. Substrate is bound by residues 117–120 (DGSS), tyrosine 225, and lysine 256. Glutamate 262 is a Mg(2+) binding site.

Belongs to the FBPase class 1 family. Homotetramer. Requires Mg(2+) as cofactor.

It localises to the cytoplasm. The catalysed reaction is beta-D-fructose 1,6-bisphosphate + H2O = beta-D-fructose 6-phosphate + phosphate. Its pathway is carbohydrate biosynthesis; gluconeogenesis. The polypeptide is Fructose-1,6-bisphosphatase class 1 (Syntrophotalea carbinolica (strain DSM 2380 / NBRC 103641 / GraBd1) (Pelobacter carbinolicus)).